We begin with the raw amino-acid sequence, 105 residues long: UPF0148 protein PYRAB12700 (105 aa).

This sequence belongs to the UPF0148 family.

This Pyrococcus abyssi (strain GE5 / Orsay) protein is UPF0148 protein PYRAB12700.